We begin with the raw amino-acid sequence, 397 residues long: Pectate lyase 4 (397 aa).

Positions 1–25 (MGIKHCCYILYFTLALVTLVQAGRL) are cleaved as a signal peptide. Residue Asn36 is glycosylated (N-linked (GlcNAc...) asparagine). A disulfide bridge links Cys54 with Cys71. PbH1 repeat units follow at residues 159 to 202 (VKNV…HVTG), 203 to 224 (SSDIWIDHCTLSKSFDGLVDVN), and 227 to 248 (STGVTISNCKFTHHEKAVLLGA). Ca(2+) contacts are provided by Asp194, Asp218, and Asp222. Residue Arg274 is part of the active site.

It belongs to the polysaccharide lyase 1 family. Amb a subfamily. Monomer. Ca(2+) serves as cofactor. In terms of processing, the N-terminus is blocked. As to expression, pollen and flowers.

The catalysed reaction is Eliminative cleavage of (1-&gt;4)-alpha-D-galacturonan to give oligosaccharides with 4-deoxy-alpha-D-galact-4-enuronosyl groups at their non-reducing ends.. It participates in glycan metabolism; pectin degradation; 2-dehydro-3-deoxy-D-gluconate from pectin: step 2/5. In terms of biological role, has pectate lyase activity. In Ambrosia artemisiifolia (Common ragweed), this protein is Pectate lyase 4.